The following is a 238-amino-acid chain: 15,16-dihydrobiliverdin:ferredoxin oxidoreductase (238 aa).

The protein belongs to the HY2 family.

The catalysed reaction is 15,16-dihydrobiliverdin + oxidized 2[4Fe-4S]-[ferredoxin] = biliverdin IXalpha + reduced 2[4Fe-4S]-[ferredoxin] + 2 H(+). Its function is as follows. Catalyzes the two-electron reduction of biliverdin IX-alpha at the C15 methine bridge. This chain is 15,16-dihydrobiliverdin:ferredoxin oxidoreductase, found in Prochlorococcus marinus (strain NATL2A).